Reading from the N-terminus, the 219-residue chain is Leukocyte surface antigen CD53 (219 aa).

The Cytoplasmic segment spans residues 1–11 (MGMSSLKLLKY). The chain crosses the membrane as a helical span at residues 12 to 32 (VLFFFNLLFWICGCCILGFGI). Topologically, residues 33 to 54 (YLLIHNNFGVLFHNLPSLTLGN) are extracellular. A helical transmembrane segment spans residues 55-69 (VFVIVGSIIMVVAFL). The Cytoplasmic segment spans residues 70 to 80 (GCMGSIKENKC). Residues 81 to 106 (LLMSFFILLLIILLAEVTLAILLFVY) traverse the membrane as a helical segment. The Extracellular portion of the chain corresponds to 107–181 (EQKLNEYVAK…AKARLWFHSN (75 aa)). N-linked (GlcNAc...) asparagine glycosylation is found at Asn129 and Asn148. A helical membrane pass occupies residues 182-206 (FLYIGIITICVCVIEVLGMSFALTL). Topologically, residues 207–219 (NCQIDKTSQTIGL) are cytoplasmic.

This sequence belongs to the tetraspanin (TM4SF) family. In terms of assembly, interacts with SCIMP. Interacts with CD45/PTPRC. Interacts with IL7R. Interacts with RBL2 and PPP2CA. As to expression, B-cells, monocytes, macrophages, neutrophils, single (CD4 or CD8) positive thymocytes and peripheral T-cells.

It localises to the cell membrane. The protein localises to the cell junction. The protein resides in the membrane. It is found in the synapse. In terms of biological role, structural component of specialized membrane microdomains known as tetraspanin-enriched microdomains (TERMs), which act as platforms for receptor clustering and signaling. Participates thereby in diverse biological functions such as cell signal transduction, adhesion, migration and protein trafficking. Plays a role in the activation of monocytes and B-cells. Acts as an essential regulator of B-cell development by promoting interleukin-7 receptor/IL7R signaling. Also promotes, in B-cells, the BCR signaling by recruiting PKC to the plasma membrane in order to phosphorylate its substrates. Plays an essential role in B- and T-cells homing to lymph nodes by stabilizing L-selectin/SELL cell surface expression. Also mediates metabolic and inflammatory functions in hepatocytes and adipose tissue by promoting TNF-alpha and LPS signaling independent of the immune compartment. This Homo sapiens (Human) protein is Leukocyte surface antigen CD53 (CD53).